Reading from the N-terminus, the 284-residue chain is UDP-N-acetylenolpyruvoylglucosamine reductase (284 aa).

Residues 21-180 (KIGGPARLFV…LKAAFKLKKA (160 aa)) enclose the FAD-binding PCMH-type domain. Arg159 is a catalytic residue. Residue Ser209 is the Proton donor of the active site. The active site involves Glu280.

The protein belongs to the MurB family. FAD serves as cofactor.

The protein resides in the cytoplasm. It carries out the reaction UDP-N-acetyl-alpha-D-muramate + NADP(+) = UDP-N-acetyl-3-O-(1-carboxyvinyl)-alpha-D-glucosamine + NADPH + H(+). Its pathway is cell wall biogenesis; peptidoglycan biosynthesis. Its function is as follows. Cell wall formation. The polypeptide is UDP-N-acetylenolpyruvoylglucosamine reductase (Pseudothermotoga lettingae (strain ATCC BAA-301 / DSM 14385 / NBRC 107922 / TMO) (Thermotoga lettingae)).